The primary structure comprises 483 residues: ATP synthase subunit beta (483 aa).

Residue 169–176 participates in ATP binding; that stretch reads GGAGVGKT.

This sequence belongs to the ATPase alpha/beta chains family. F-type ATPases have 2 components, CF(1) - the catalytic core - and CF(0) - the membrane proton channel. CF(1) has five subunits: alpha(3), beta(3), gamma(1), delta(1), epsilon(1). CF(0) has three main subunits: a(1), b(2) and c(9-12). The alpha and beta chains form an alternating ring which encloses part of the gamma chain. CF(1) is attached to CF(0) by a central stalk formed by the gamma and epsilon chains, while a peripheral stalk is formed by the delta and b chains.

The protein localises to the cell membrane. It carries out the reaction ATP + H2O + 4 H(+)(in) = ADP + phosphate + 5 H(+)(out). Produces ATP from ADP in the presence of a proton gradient across the membrane. The catalytic sites are hosted primarily by the beta subunits. This chain is ATP synthase subunit beta, found in Rhodococcus jostii (strain RHA1).